We begin with the raw amino-acid sequence, 318 residues long: MAILEQPYLDLLQKIMSEGHGKDDRTGTGTRSYFGAQMRFDLSQGFPLLTTKKVPFGLIKSELLWFLRGDTNIRFLLEHNNHIWDEWAFKNWVNSSEYQGPDMTDFGLRSQSDPEFNKIYQAEMKKFDQRILDDEDFAKKYGNLGDVYGAQWRHWEKREGGFIDQIADVIKQIKETPDSRRMIVTAWNPEDVPTSALPPCHVMFQFYVVDGKISVQLYQRSGDMFLGVPFNIASYSLLLNLIARETGLQVGEFIHTLGDAHIYRNHLKQVEELLSRKPYDSPQLWLNPEKKNIADFEMKDIKVVDYQHHGTIKAPVAV.

Residues R25 and 180–181 (RR) contribute to the dUMP site. The active-site Nucleophile is C200. DUMP contacts are provided by residues 220-223 (RSGD), N231, and 261-263 (HIY). D223 contacts (6R)-5,10-methylene-5,6,7,8-tetrahydrofolate. (6R)-5,10-methylene-5,6,7,8-tetrahydrofolate is bound at residue A317.

This sequence belongs to the thymidylate synthase family. Bacterial-type ThyA subfamily. Homodimer.

Its subcellular location is the cytoplasm. It carries out the reaction dUMP + (6R)-5,10-methylene-5,6,7,8-tetrahydrofolate = 7,8-dihydrofolate + dTMP. It participates in pyrimidine metabolism; dTTP biosynthesis. In terms of biological role, catalyzes the reductive methylation of 2'-deoxyuridine-5'-monophosphate (dUMP) to 2'-deoxythymidine-5'-monophosphate (dTMP) while utilizing 5,10-methylenetetrahydrofolate (mTHF) as the methyl donor and reductant in the reaction, yielding dihydrofolate (DHF) as a by-product. This enzymatic reaction provides an intracellular de novo source of dTMP, an essential precursor for DNA biosynthesis. The sequence is that of Thymidylate synthase from Lactobacillus helveticus (strain DPC 4571).